The chain runs to 378 residues: Protein FAM185A (378 aa).

The polypeptide is Protein FAM185A (Fam185a) (Mus musculus (Mouse)).